The chain runs to 430 residues: Adenylosuccinate synthetase (430 aa).

GTP contacts are provided by residues 12–18 (GDEGKGK) and 40–42 (GHT). Residue aspartate 13 is the Proton acceptor of the active site. Positions 13 and 40 each coordinate Mg(2+). Residues 13 to 16 (DEGK), 38 to 41 (NAGH), threonine 128, arginine 142, glutamine 223, threonine 238, and arginine 302 contribute to the IMP site. Histidine 41 acts as the Proton donor in catalysis. A substrate-binding site is contributed by 298–304 (TTTGRPR). GTP contacts are provided by residues arginine 304, 330–332 (SID), and 412–414 (SVG).

It belongs to the adenylosuccinate synthetase family. In terms of assembly, homodimer. The cofactor is Mg(2+).

It is found in the cytoplasm. The catalysed reaction is IMP + L-aspartate + GTP = N(6)-(1,2-dicarboxyethyl)-AMP + GDP + phosphate + 2 H(+). Its pathway is purine metabolism; AMP biosynthesis via de novo pathway; AMP from IMP: step 1/2. Functionally, plays an important role in the de novo pathway of purine nucleotide biosynthesis. Catalyzes the first committed step in the biosynthesis of AMP from IMP. In Streptococcus pyogenes serotype M1, this protein is Adenylosuccinate synthetase.